Reading from the N-terminus, the 329-residue chain is MLPTAVLLVLAVSVVARDNTTCDGPCGVRFRQNRQGGVRIIGGQDAAHGAWPWMVSLQIFTYHNNRRYHVCGGSLLNSQWLLTAAHCFRIKKKVTDWRLIFGAKEVEWGTNKPVKPPLQERYVEKIIIHEKYSASSEANDIALMKITPPVTCGHFIGPGCLPQFRAGPPRVPQTCWVAGWGFLQENARRTSPMLQEARVDLIDLGLCNSTRWYNGRIRSTNVCAGYPEGKIDTCQGDSGGPLMCKDSAENSYVVVGITSWGVGCARAKRPGVYTSTWSYLNWIASKIGSTAVHMIQLPTASPASTPGAQASSGSVQPSVRPPWFFQQIT.

The N-terminal stretch at 1 to 17 (MLPTAVLLVLAVSVVAR) is a signal peptide. A glycan (N-linked (GlcNAc...) asparagine) is linked at N19. Intrachain disulfides connect C22-C152, C26-C160, C71-C87, C175-C244, C207-C223, and C234-C264. Residues 40–288 (IIGGQDAAHG…YLNWIASKIG (249 aa)) form the Peptidase S1 domain. Residues H86 and D140 each act as charge relay system in the active site. Residue N208 is glycosylated (N-linked (GlcNAc...) asparagine). Catalysis depends on S238, which acts as the Charge relay system.

The protein belongs to the peptidase S1 family. As to quaternary structure, heavy chain (catalytic) and a light chain linked by two disulfide bonds. Forms a heterodimer with SERPINA5.

It carries out the reaction Preferential cleavage: Arg-|-Xaa, Lys-|-Xaa.. Inhibited by SERPINA5. Functionally, acrosin is the major protease of mammalian spermatozoa. It is a serine protease of trypsin-like cleavage specificity, it is synthesized in a zymogen form, proacrosin and stored in the acrosome. The sequence is that of Acrosin (ACR) from Ovis aries (Sheep).